The following is a 159-amino-acid chain: MTDTFWAFIGLILFLALLFYFKVPAMALRSLDERAKRIAGELDEALRLREEAQGILAEYQQKCAGIEQDVQEIITAAKHEAEIIVAEARVKTEEYVKNRNKLVEQKIAQAESDAIQEISSSAVNLAISSASKIINNELGAKKANDLIKESIIKVKTNLH.

A helical transmembrane segment spans residues 5–25 (FWAFIGLILFLALLFYFKVPA).

It belongs to the ATPase B chain family. In terms of assembly, F-type ATPases have 2 components, F(1) - the catalytic core - and F(0) - the membrane proton channel. F(1) has five subunits: alpha(3), beta(3), gamma(1), delta(1), epsilon(1). F(0) has three main subunits: a(1), b(2) and c(10-14). The alpha and beta chains form an alternating ring which encloses part of the gamma chain. F(1) is attached to F(0) by a central stalk formed by the gamma and epsilon chains, while a peripheral stalk is formed by the delta and b chains.

It localises to the cell inner membrane. Functionally, f(1)F(0) ATP synthase produces ATP from ADP in the presence of a proton or sodium gradient. F-type ATPases consist of two structural domains, F(1) containing the extramembraneous catalytic core and F(0) containing the membrane proton channel, linked together by a central stalk and a peripheral stalk. During catalysis, ATP synthesis in the catalytic domain of F(1) is coupled via a rotary mechanism of the central stalk subunits to proton translocation. Component of the F(0) channel, it forms part of the peripheral stalk, linking F(1) to F(0). The chain is ATP synthase subunit b 1 from Bartonella bacilliformis (strain ATCC 35685 / KC583 / Herrer 020/F12,63).